Here is a 229-residue protein sequence, read N- to C-terminus: uncharacterized protein (229 aa).

Positions M1–A26 are cleaved as a signal peptide.

Belongs to the OmpW/AlkL family.

The protein resides in the cell outer membrane. This is an uncharacterized protein from Sinorhizobium fredii (strain NBRC 101917 / NGR234).